The sequence spans 119 residues: uncharacterized protein (119 aa).

An N-terminal signal peptide occupies residues 1–30; the sequence is MCPECFFLMLCFCGYCSSSSSSFRSSPVYG.

This is an uncharacterized protein from Escherichia coli (strain UTI89 / UPEC).